The following is a 60-amino-acid chain: Large ribosomal subunit protein uL30 (60 aa).

Belongs to the universal ribosomal protein uL30 family. In terms of assembly, part of the 50S ribosomal subunit.

In Streptococcus equi subsp. equi (strain 4047), this protein is Large ribosomal subunit protein uL30.